A 252-amino-acid polypeptide reads, in one-letter code: Ribosomal RNA small subunit methyltransferase J (252 aa).

S-adenosyl-L-methionine-binding positions include 101 to 102, 117 to 118, 153 to 154, and aspartate 171; these read RD, ER, and SS.

It belongs to the methyltransferase superfamily. RsmJ family.

It localises to the cytoplasm. The enzyme catalyses guanosine(1516) in 16S rRNA + S-adenosyl-L-methionine = N(2)-methylguanosine(1516) in 16S rRNA + S-adenosyl-L-homocysteine + H(+). Functionally, specifically methylates the guanosine in position 1516 of 16S rRNA. The sequence is that of Ribosomal RNA small subunit methyltransferase J from Salmonella choleraesuis (strain SC-B67).